A 748-amino-acid chain; its full sequence is Rho GTPase-activating protein 24 (748 aa).

Residues 18–124 (NATKCGWLRK…WVKSIRRVIW (107 aa)) form the PH domain. Residues 134-328 (QKLEDTVRYE…VMISKHDRLF (195 aa)) enclose the Rho-GAP domain. Positions 328-476 (FPKDTEPQSK…SSGTKMGTHS (149 aa)) are disordered. Polar residues-rich tracts occupy residues 335 to 347 (QSKPQEGPNSNNN) and 356 to 368 (GQLQNKENNNTKE). 8 positions are modified to phosphoserine: S369, S391, S396, S398, S402, S413, S415, and S437. Over residues 369–381 (SPVRRCSWDKPES) the composition is skewed to basic and acidic residues. The segment covering 382–405 (PQRSSMDNGSPTALSGSKTNSPRN) has biased composition (polar residues). The segment covering 432–476 (IVTNGSFSSSNAEGVEKTQTTPNGSLQARRTSSLKSSGTKMGTHS) has biased composition (polar residues). Residue T452 is modified to Phosphothreonine. S495 carries the phosphoserine modification. The disordered stretch occupies residues 582 to 640 (DFYGGNFEDPVLDGPPQDDLSHPGDYENKSDRRSVGGRSSRATSSSDNSETFVGNTSSN). Residues 600 to 615 (DLSHPGDYENKSDRRS) show a composition bias toward basic and acidic residues. The segment covering 617-630 (GGRSSRATSSSDNS) has biased composition (low complexity). Residues 631–640 (ETFVGNTSSN) are compositionally biased toward polar residues. Residues 649–729 (SSLKQEMTKQ…KEMEQFFSTF (81 aa)) adopt a coiled-coil conformation.

In terms of assembly, interacts with FLNA. Phosphorylated by ROCK, leading to activate the RacGAP activity.

It is found in the cytoplasm. The protein resides in the cytoskeleton. Its subcellular location is the cell junction. It localises to the adherens junction. The protein localises to the focal adhesion. It is found in the cell projection. Functionally, rho GTPase-activating protein involved in cell polarity, cell morphology and cytoskeletal organization. Acts as a GTPase activator for the Rac-type GTPase by converting it to an inactive GDP-bound state. Controls actin remodeling by inactivating Rac downstream of Rho leading to suppress leading edge protrusion and promotes cell retraction to achieve cellular polarity. Able to suppress RAC1 and CDC42 activity in vitro. Overexpression induces cell rounding with partial or complete disruption of actin stress fibers and formation of membrane ruffles, lamellipodia, and filopodia. Isoform 2 is a vascular cell-specific GAP involved in modulation of angiogenesis. This Rattus norvegicus (Rat) protein is Rho GTPase-activating protein 24 (Arhgap24).